The following is a 43-amino-acid chain: Metallothionein A (43 aa).

The segment at 1 to 16 is beta; sequence SCAGSCKCKNCRCRSC. A divalent metal cation-binding residues include Cys-2, Cys-6, Cys-8, Cys-11, Cys-13, Cys-16, Cys-20, Cys-21, Cys-23, Cys-24, Cys-28, Cys-31, Cys-35, and Cys-37. Residues 17 to 43 are alpha; it reads RKSCCSCCPAGCNNCAKGCVCKEPASS.

It belongs to the metallothionein superfamily. Type 1 family.

Metallothioneins have a high content of cysteine residues that bind various heavy metals. In Colinus virginianus (Northern bobwhite), this protein is Metallothionein A.